The primary structure comprises 282 residues: Bifunctional protein FolD (282 aa).

Residues 165–167 (GAS) and I231 contribute to the NADP(+) site.

The protein belongs to the tetrahydrofolate dehydrogenase/cyclohydrolase family. Homodimer.

The catalysed reaction is (6R)-5,10-methylene-5,6,7,8-tetrahydrofolate + NADP(+) = (6R)-5,10-methenyltetrahydrofolate + NADPH. The enzyme catalyses (6R)-5,10-methenyltetrahydrofolate + H2O = (6R)-10-formyltetrahydrofolate + H(+). It functions in the pathway one-carbon metabolism; tetrahydrofolate interconversion. Functionally, catalyzes the oxidation of 5,10-methylenetetrahydrofolate to 5,10-methenyltetrahydrofolate and then the hydrolysis of 5,10-methenyltetrahydrofolate to 10-formyltetrahydrofolate. The chain is Bifunctional protein FolD from Francisella tularensis subsp. novicida (strain U112).